A 172-amino-acid chain; its full sequence is MVKFLLLALALGVSCAHYQNLEVSPSEVDGKWYSLYIAADNKEKVSEGGPLRAYIKNVECIDECQTLKITFYTKVEGVCQEHTIVGRKGEDGKYITDFSGQNYFHIVEKSDDTMTFHNVNVDDSGKTNVILVVGRGESSSIEQKQRFEKTAEEYDIPKENIEDLVPTDNCDQ.

The N-terminal stretch at 1–16 (MVKFLLLALALGVSCA) is a signal peptide. 2 cysteine pairs are disulfide-bonded: Cys-60/Cys-64 and Cys-79/Cys-170.

This sequence belongs to the calycin superfamily. Lipocalin family. As to expression, expressed in the lacrimal gland from where it is secreted into tears (at protein level).

The protein localises to the secreted. This Mesocricetus auratus (Golden hamster) protein is Female-specific lacrimal gland protein.